A 518-amino-acid chain; its full sequence is Probable inorganic carbon transporter subunit DabB (518 aa).

13 helical membrane-spanning segments follow: residues 3–23 (MQWV…LGSL), 37–57 (ISLL…FEWV), 65–85 (WVGV…IAFV), 114–134 (CVVT…WIAI), 165–185 (AEAC…TWFI), 207–227 (MLLA…GWLI), 242–262 (AGII…IVLS), 264–284 (MAQW…ALVM), 302–322 (MGLM…LHLV), 358–378 (WWFA…LADL), 379–399 (SGPY…IAER), 403–423 (LTSS…VVYT), and 442–462 (WKGD…YFLL).

The protein belongs to the inorganic carbon transporter (TC 9.A.2) DabB family. As to quaternary structure, forms a complex with DabA.

Its subcellular location is the cell inner membrane. Its activity is regulated as follows. Intracellular DIC accumulation is sensitive to CCCP (carbonyl cyanide-m-chlorophenylhydrazone) and DCCD (N,N-dicyclohexylcarbodiimide) and therefore likely driven by either proton gradient, ATP, or both. Part of an energy-coupled inorganic carbon pump involved in transport of dissolved inorganic carbon (DIC) with downstream gene dabA (Tcr_0854); has been suggested to be a proton-DIC symporter. The sequence is that of Probable inorganic carbon transporter subunit DabB from Hydrogenovibrio crunogenus (strain DSM 25203 / XCL-2) (Thiomicrospira crunogena).